The chain runs to 445 residues: Phosphoglucosamine mutase (445 aa).

Serine 104 serves as the catalytic Phosphoserine intermediate. Residues serine 104, aspartate 243, aspartate 245, and aspartate 247 each coordinate Mg(2+). The residue at position 104 (serine 104) is a Phosphoserine.

Belongs to the phosphohexose mutase family. Mg(2+) is required as a cofactor. Activated by phosphorylation.

The catalysed reaction is alpha-D-glucosamine 1-phosphate = D-glucosamine 6-phosphate. Catalyzes the conversion of glucosamine-6-phosphate to glucosamine-1-phosphate. This Neisseria subflava protein is Phosphoglucosamine mutase.